The primary structure comprises 604 residues: UvrABC system protein C (604 aa).

The region spanning 13–92 (ASPGVYLMKD…IKKYHPKYNV (80 aa)) is the GIY-YIG domain. Residues 205-240 (SEIVQDLEKSIEKASKEQKFEQAGMYYRTLKLIQQA) enclose the UVR domain.

The protein belongs to the UvrC family. As to quaternary structure, interacts with UvrB in an incision complex.

It localises to the cytoplasm. The UvrABC repair system catalyzes the recognition and processing of DNA lesions. UvrC both incises the 5' and 3' sides of the lesion. The N-terminal half is responsible for the 3' incision and the C-terminal half is responsible for the 5' incision. In Chlamydia abortus (strain DSM 27085 / S26/3) (Chlamydophila abortus), this protein is UvrABC system protein C.